A 333-amino-acid chain; its full sequence is MTSPNPPSSGKPLKLRINRDSEGYLSLVTDTGEVYRCPICGNDKFIYNYERGEVVCIVCGAVVQEQLLDLGPEWRAFTSEERGQRARTGAPLTRLISEALTTVIDWRDKDVSGKELDIKRKLEVIRLRKWQTRARVQTSYERNFIQAAQELERLRSSMGIPRPCIEQALEIYRQALEKELVRGRSVEAMAAAALYMACRMMKMPRPLDELVRYTKASRREVARCYRLLLRELNVKVPISDPTLYISRIAEQLKLSGEVVKTAIDILQKAKKAGITAGKDPAGLAAAAVYIASLMHGDNRTQKDFAVAAGVTEVTVRNRYKELAKALNIKVPVK.

Residues 33–64 form a TFIIB-type zinc finger; it reads EVYRCPICGNDKFIYNYERGEVVCIVCGAVVQ. Positions 37, 40, 56, and 59 each coordinate Zn(2+). A run of 2 repeats spans residues 149–232 and 243–324.

Belongs to the TFIIB family.

Stabilizes TBP binding to an archaeal box-A promoter. Also responsible for recruiting RNA polymerase II to the pre-initiation complex (DNA-TBP-TFIIB). This is Transcription initiation factor IIB from Pyrobaculum neutrophilum (strain DSM 2338 / JCM 9278 / NBRC 100436 / V24Sta) (Thermoproteus neutrophilus).